We begin with the raw amino-acid sequence, 248 residues long: Probable transcriptional regulatory protein Mrad2831_3553 (248 aa).

This sequence belongs to the TACO1 family.

Its subcellular location is the cytoplasm. This chain is Probable transcriptional regulatory protein Mrad2831_3553, found in Methylobacterium radiotolerans (strain ATCC 27329 / DSM 1819 / JCM 2831 / NBRC 15690 / NCIMB 10815 / 0-1).